The chain runs to 180 residues: Major urinary protein 6 (180 aa).

An N-terminal signal peptide occupies residues 1-18 (MKMLLLLCLGLTLVCVHA). An intrachain disulfide couples cysteine 82 to cysteine 175.

It belongs to the calycin superfamily. Lipocalin family. Abundant in the urine of adult male mice but absent from that of females.

Its subcellular location is the secreted. In terms of biological role, binds pheromones that are released from drying urine of males. These pheromones affect the sexual behavior of females. The chain is Major urinary protein 6 (Mup6) from Mus musculus (Mouse).